The sequence spans 351 residues: D-glucoside 3-dehydrogenase (351 aa).

The protein belongs to the Gfo/Idh/MocA family.

It catalyses the reaction a D-glucoside + NAD(+) = a 3-dehydro-D-glucoside + NADH + H(+). Its function is as follows. Catalyzes the NADH-dependent reduction of the oxo group at C3 of 3-dehydro-D-glucosides leading to D-glucosides. Probably functions in a metabolic pathway that transforms D-gulosides to D-glucosides. Can use 3-dehydro-D-glucose, methyl alpha-3-dehydro-D-glucoside and methyl beta-3-dehydro-D-glucoside as substrates in vitro. However, the actual specific physiological substrates for this metabolic pathway are unknown. To a lesser extent, is also able to catalyze the reverse reactions, i.e. the NAD(+)-dependent oxidation of the hydroxyl group at C3 of D-glucosides leading to 3-dehydro-D-glucosides. Cannot act on UDP-glucose, UDP-N-acetyl-D-glucosamine, D-glucosamine, N-acetyl-D-glucosamine, or UDP-D-galactose. The chain is D-glucoside 3-dehydrogenase (ycjS) from Escherichia coli (strain K12).